Consider the following 318-residue polypeptide: Ribosomal RNA small subunit methyltransferase A (318 aa).

The S-adenosyl-L-methionine site is built by N40, V42, G67, E88, D118, and N137. Positions 296 to 305 (ADRGGSDREG) are enriched in basic and acidic residues. The interval 296-318 (ADRGGSDREGTSPPTAGQGAPAC) is disordered.

Belongs to the class I-like SAM-binding methyltransferase superfamily. rRNA adenine N(6)-methyltransferase family. RsmA subfamily.

It localises to the cytoplasm. The catalysed reaction is adenosine(1518)/adenosine(1519) in 16S rRNA + 4 S-adenosyl-L-methionine = N(6)-dimethyladenosine(1518)/N(6)-dimethyladenosine(1519) in 16S rRNA + 4 S-adenosyl-L-homocysteine + 4 H(+). In terms of biological role, specifically dimethylates two adjacent adenosines (A1518 and A1519) in the loop of a conserved hairpin near the 3'-end of 16S rRNA in the 30S particle. May play a critical role in biogenesis of 30S subunits. The polypeptide is Ribosomal RNA small subunit methyltransferase A (Mycobacterium avium (strain 104)).